Reading from the N-terminus, the 400-residue chain is NADH-quinone oxidoreductase subunit D (400 aa).

The protein belongs to the complex I 49 kDa subunit family. In terms of assembly, NDH-1 is composed of 14 different subunits. Subunits NuoB, C, D, E, F, and G constitute the peripheral sector of the complex.

The protein localises to the cell inner membrane. The enzyme catalyses a quinone + NADH + 5 H(+)(in) = a quinol + NAD(+) + 4 H(+)(out). In terms of biological role, NDH-1 shuttles electrons from NADH, via FMN and iron-sulfur (Fe-S) centers, to quinones in the respiratory chain. The immediate electron acceptor for the enzyme in this species is believed to be a menaquinone. Couples the redox reaction to proton translocation (for every two electrons transferred, four hydrogen ions are translocated across the cytoplasmic membrane), and thus conserves the redox energy in a proton gradient. This chain is NADH-quinone oxidoreductase subunit D, found in Chlorobaculum parvum (strain DSM 263 / NCIMB 8327) (Chlorobium vibrioforme subsp. thiosulfatophilum).